The sequence spans 494 residues: uncharacterized protein (494 aa).

This is an uncharacterized protein from Magallana gigas (Pacific oyster).